The primary structure comprises 515 residues: E3 ubiquitin-protein ligase RNF38 (515 aa).

The Bipartite nuclear localization signal 1 signature appears at 57–71 (DSPSPKRQRLSHSVF). The disordered stretch occupies residues 73-141 (YTSASPAPSP…LSRHNSISQD (69 aa)). A compositionally biased stretch (polar residues) spans 89–104 (MTSNRQPPSVRPSQHH). Positions 115 to 131 (RNRRSPPVRRQRGRRDR) match the Bipartite nuclear localization signal 2 motif. A compositionally biased stretch (basic residues) spans 115–134 (RNRRSPPVRRQRGRRDRLSR). The RING-type zinc-finger motif lies at 463–504 (CVVCMCDFESRQLLRVLPCNHEFHAKCVDKWLKANRTCPICR).

As to expression, widely expressed with highest levels in testis.

The protein resides in the nucleus. The catalysed reaction is S-ubiquitinyl-[E2 ubiquitin-conjugating enzyme]-L-cysteine + [acceptor protein]-L-lysine = [E2 ubiquitin-conjugating enzyme]-L-cysteine + N(6)-ubiquitinyl-[acceptor protein]-L-lysine.. The protein operates within protein modification; protein ubiquitination. Acts as an E3 ubiquitin-protein ligase able to ubiquitinate p53/TP53 which promotes its relocalization to discrete foci associated with PML nuclear bodies. Exhibits preference for UBE2D2 as a E2 enzyme. This Homo sapiens (Human) protein is E3 ubiquitin-protein ligase RNF38.